The following is a 103-amino-acid chain: Pyrimidine/purine nucleoside phosphorylase (103 aa).

It belongs to the nucleoside phosphorylase PpnP family.

It carries out the reaction a purine D-ribonucleoside + phosphate = a purine nucleobase + alpha-D-ribose 1-phosphate. The enzyme catalyses adenosine + phosphate = alpha-D-ribose 1-phosphate + adenine. It catalyses the reaction cytidine + phosphate = cytosine + alpha-D-ribose 1-phosphate. The catalysed reaction is guanosine + phosphate = alpha-D-ribose 1-phosphate + guanine. It carries out the reaction inosine + phosphate = alpha-D-ribose 1-phosphate + hypoxanthine. The enzyme catalyses thymidine + phosphate = 2-deoxy-alpha-D-ribose 1-phosphate + thymine. It catalyses the reaction uridine + phosphate = alpha-D-ribose 1-phosphate + uracil. The catalysed reaction is xanthosine + phosphate = alpha-D-ribose 1-phosphate + xanthine. In terms of biological role, catalyzes the phosphorolysis of diverse nucleosides, yielding D-ribose 1-phosphate and the respective free bases. Can use uridine, adenosine, guanosine, cytidine, thymidine, inosine and xanthosine as substrates. Also catalyzes the reverse reactions. In Sulfurovum sp. (strain NBC37-1), this protein is Pyrimidine/purine nucleoside phosphorylase.